The sequence spans 1033 residues: Isoleucine--tRNA ligase 2 (1033 aa).

The 'HIGH' region signature appears at 47-57 (PTANGLPHVGH). The short motif at 590–594 (KMSKS) is the 'KMSKS' region element. Lysine 593 contributes to the ATP binding site.

The protein belongs to the class-I aminoacyl-tRNA synthetase family. IleS type 2 subfamily. Monomer. Requires Zn(2+) as cofactor.

The protein localises to the cytoplasm. The enzyme catalyses tRNA(Ile) + L-isoleucine + ATP = L-isoleucyl-tRNA(Ile) + AMP + diphosphate. Catalyzes the attachment of isoleucine to tRNA(Ile). As IleRS can inadvertently accommodate and process structurally similar amino acids such as valine, to avoid such errors it has two additional distinct tRNA(Ile)-dependent editing activities. One activity is designated as 'pretransfer' editing and involves the hydrolysis of activated Val-AMP. The other activity is designated 'posttransfer' editing and involves deacylation of mischarged Val-tRNA(Ile). This Bacillus cereus (strain ATCC 14579 / DSM 31 / CCUG 7414 / JCM 2152 / NBRC 15305 / NCIMB 9373 / NCTC 2599 / NRRL B-3711) protein is Isoleucine--tRNA ligase 2.